The sequence spans 167 residues: Phosphopantetheine adenylyltransferase (167 aa).

Thr-10 serves as a coordination point for substrate. Residues 10-11 (TF) and His-18 each bind ATP. Residues Lys-42, Leu-75, and Arg-89 each coordinate substrate. Residues 90 to 92 (GVR), Glu-100, and 125 to 131 (YTYVASS) contribute to the ATP site.

It belongs to the bacterial CoaD family. Homohexamer. The cofactor is Mg(2+).

Its subcellular location is the cytoplasm. It carries out the reaction (R)-4'-phosphopantetheine + ATP + H(+) = 3'-dephospho-CoA + diphosphate. Its pathway is cofactor biosynthesis; coenzyme A biosynthesis; CoA from (R)-pantothenate: step 4/5. Reversibly transfers an adenylyl group from ATP to 4'-phosphopantetheine, yielding dephospho-CoA (dPCoA) and pyrophosphate. The chain is Phosphopantetheine adenylyltransferase from Chlorobium phaeobacteroides (strain DSM 266 / SMG 266 / 2430).